Here is a 102-residue protein sequence, read N- to C-terminus: NADH-quinone oxidoreductase subunit K (102 aa).

3 helical membrane-spanning segments follow: residues 5–25 (IAHYLTVSAIMFTVGIFGIFL), 31–51 (IIILMSIELILLSVNLNFVAF), and 66–86 (FILTVAAAEAAIGLAILVVFF).

Belongs to the complex I subunit 4L family. In terms of assembly, NDH-1 is composed of 14 different subunits. Subunits NuoA, H, J, K, L, M, N constitute the membrane sector of the complex.

Its subcellular location is the cell inner membrane. The catalysed reaction is a quinone + NADH + 5 H(+)(in) = a quinol + NAD(+) + 4 H(+)(out). NDH-1 shuttles electrons from NADH, via FMN and iron-sulfur (Fe-S) centers, to quinones in the respiratory chain. The immediate electron acceptor for the enzyme in this species is believed to be ubiquinone. Couples the redox reaction to proton translocation (for every two electrons transferred, four hydrogen ions are translocated across the cytoplasmic membrane), and thus conserves the redox energy in a proton gradient. This Bartonella bacilliformis (strain ATCC 35685 / KC583 / Herrer 020/F12,63) protein is NADH-quinone oxidoreductase subunit K.